The sequence spans 129 residues: Small ribosomal subunit protein uS13 (129 aa).

Positions His92 to Arg114 are enriched in basic residues. A disordered region spans residues His92–Lys129.

It belongs to the universal ribosomal protein uS13 family. In terms of assembly, part of the 30S ribosomal subunit. Forms a loose heterodimer with protein S19. Forms two bridges to the 50S subunit in the 70S ribosome.

In terms of biological role, located at the top of the head of the 30S subunit, it contacts several helices of the 16S rRNA. In the 70S ribosome it contacts the 23S rRNA (bridge B1a) and protein L5 of the 50S subunit (bridge B1b), connecting the 2 subunits; these bridges are implicated in subunit movement. Contacts the tRNAs in the A and P-sites. The chain is Small ribosomal subunit protein uS13 from Dehalococcoides mccartyi (strain ATCC BAA-2266 / KCTC 15142 / 195) (Dehalococcoides ethenogenes (strain 195)).